The chain runs to 278 residues: Neuronal membrane glycoprotein M6-a (278 aa).

An N-acetylmethionine modification is found at M1. At M1–L22 the chain is on the cytoplasmic side. A helical transmembrane segment spans residues G23–F43. Over C44 to V84 the chain is Extracellular. Residues I85–F105 form a helical membrane-spanning segment. Residues T106–S127 are Cytoplasmic-facing. The helical transmembrane segment at A128–T148 threads the bilayer. Residues S149–L213 are Extracellular-facing. N164 is a glycosylation site (N-linked (GlcNAc...) asparagine). A disulfide bridge connects residues C174 and C192. An N-linked (GlcNAc...) asparagine glycan is attached at N208. The helical transmembrane segment at F214–V234 threads the bilayer. Residues L235 to T278 are Cytoplasmic-facing. S256 is modified (phosphoserine). T278 is subject to Phosphothreonine.

It belongs to the myelin proteolipid protein family. In terms of assembly, interacts with OPRM1. Interacts with palmitoyltransferase ZDHHC17/HIP14; the interaction leads to palmitoylation of GPM6A. In terms of processing, N-glycosylated. Palmitoylated by ZDHHC17/HIP14. Expressed in hippocampus (at protein level). Isoform 1 is the predominant isoform expressed in brain, specifically in hippocampus. Isoform 2 is expressed at low levels in brain and kidney.

The protein resides in the cell membrane. The protein localises to the cell projection. Its subcellular location is the axon. It is found in the growth cone. It localises to the dendritic spine. The protein resides in the filopodium. The protein localises to the neuron projection. Involved in neuronal differentiation, including differentiation and migration of neuronal stem cells. Plays a role in neuronal plasticity and is involved in neurite and filopodia outgrowth, filopodia motility and probably synapse formation. Gpm6a-induced filopodia formation involves mitogen-activated protein kinase (MAPK) and Src signaling pathways. May be involved in neuronal NGF-dependent Ca(2+) influx. May be involved in regulation of endocytosis and intracellular trafficking of G-protein-coupled receptors (GPCRs); enhances internalization and recycling of mu-type opioid receptor. The chain is Neuronal membrane glycoprotein M6-a (Gpm6a) from Rattus norvegicus (Rat).